Consider the following 169-residue polypeptide: Crossover junction endodeoxyribonuclease RuvC (169 aa).

Active-site residues include aspartate 11, glutamate 71, and histidine 143. 3 residues coordinate Mg(2+): aspartate 11, glutamate 71, and histidine 143.

This sequence belongs to the RuvC family. Homodimer which binds Holliday junction (HJ) DNA. The HJ becomes 2-fold symmetrical on binding to RuvC with unstacked arms; it has a different conformation from HJ DNA in complex with RuvA. In the full resolvosome a probable DNA-RuvA(4)-RuvB(12)-RuvC(2) complex forms which resolves the HJ. Mg(2+) serves as cofactor.

It localises to the cytoplasm. The enzyme catalyses Endonucleolytic cleavage at a junction such as a reciprocal single-stranded crossover between two homologous DNA duplexes (Holliday junction).. Its function is as follows. The RuvA-RuvB-RuvC complex processes Holliday junction (HJ) DNA during genetic recombination and DNA repair. Endonuclease that resolves HJ intermediates. Cleaves cruciform DNA by making single-stranded nicks across the HJ at symmetrical positions within the homologous arms, yielding a 5'-phosphate and a 3'-hydroxyl group; requires a central core of homology in the junction. The consensus cleavage sequence is 5'-(A/T)TT(C/G)-3'. Cleavage occurs on the 3'-side of the TT dinucleotide at the point of strand exchange. HJ branch migration catalyzed by RuvA-RuvB allows RuvC to scan DNA until it finds its consensus sequence, where it cleaves and resolves the cruciform DNA. In Mesorhizobium japonicum (strain LMG 29417 / CECT 9101 / MAFF 303099) (Mesorhizobium loti (strain MAFF 303099)), this protein is Crossover junction endodeoxyribonuclease RuvC.